Consider the following 168-residue polypeptide: Thiol peroxidase (168 aa).

The Thioredoxin domain maps to 19-168 (PQAGSKAQAF…YDAALNVLKA (150 aa)). Catalysis depends on C61, which acts as the Cysteine sulfenic acid (-SOH) intermediate. Cysteines 61 and 95 form a disulfide.

It belongs to the peroxiredoxin family. Tpx subfamily. As to quaternary structure, homodimer.

The enzyme catalyses a hydroperoxide + [thioredoxin]-dithiol = an alcohol + [thioredoxin]-disulfide + H2O. Functionally, thiol-specific peroxidase that catalyzes the reduction of hydrogen peroxide and organic hydroperoxides to water and alcohols, respectively. Plays a role in cell protection against oxidative stress by detoxifying peroxides. The chain is Thiol peroxidase from Salmonella typhi.